The sequence spans 1073 residues: DNA-directed RNA polymerase subunit beta (1073 aa).

It belongs to the RNA polymerase beta chain family. In plastids the minimal PEP RNA polymerase catalytic core is composed of four subunits: alpha, beta, beta', and beta''. When a (nuclear-encoded) sigma factor is associated with the core the holoenzyme is formed, which can initiate transcription.

It is found in the plastid. The protein resides in the chloroplast. The catalysed reaction is RNA(n) + a ribonucleoside 5'-triphosphate = RNA(n+1) + diphosphate. DNA-dependent RNA polymerase catalyzes the transcription of DNA into RNA using the four ribonucleoside triphosphates as substrates. The chain is DNA-directed RNA polymerase subunit beta from Aethionema cordifolium (Lebanon stonecress).